A 383-amino-acid polypeptide reads, in one-letter code: F-box/kelch-repeat protein At2g29830 (383 aa).

Residues methionine 1–glutamine 21 are disordered. A compositionally biased stretch (acidic residues) spans proline 11–glutamine 21. The region spanning leucine 27 to arginine 73 is the F-box domain. Kelch repeat units follow at residues lysine 130–glycine 178, arginine 179–tyrosine 224, valine 226–aspartate 272, leucine 274–threonine 317, and lysine 324–proline 370.

In Arabidopsis thaliana (Mouse-ear cress), this protein is F-box/kelch-repeat protein At2g29830.